A 141-amino-acid chain; its full sequence is Hemoglobin subunit alpha-D (141 aa).

The Globin domain occupies 1-141 (VLTAEDRRLL…VADVLSEKYR (141 aa)). Heme b-binding residues include histidine 57 and histidine 87.

It belongs to the globin family. The deoxy-Hb is a heterotetramer of two alpha and two beta chains, but oxygenation results in dissociation to dimers. As to expression, red blood cells.

Its function is as follows. Involved in oxygen transport from the lung to the various peripheral tissues. In Erythrolamprus miliaris (South American water snake), this protein is Hemoglobin subunit alpha-D (HBAD).